Here is a 313-residue protein sequence, read N- to C-terminus: tRNA-cytidine(32) 2-sulfurtransferase (313 aa).

The short motif at 46 to 51 (SGGKDS) is the PP-loop motif element. Residues cysteine 121, cysteine 124, and cysteine 212 each coordinate [4Fe-4S] cluster.

It belongs to the TtcA family. Homodimer. Mg(2+) is required as a cofactor. It depends on [4Fe-4S] cluster as a cofactor.

It localises to the cytoplasm. It carries out the reaction cytidine(32) in tRNA + S-sulfanyl-L-cysteinyl-[cysteine desulfurase] + AH2 + ATP = 2-thiocytidine(32) in tRNA + L-cysteinyl-[cysteine desulfurase] + A + AMP + diphosphate + H(+). The protein operates within tRNA modification. Its function is as follows. Catalyzes the ATP-dependent 2-thiolation of cytidine in position 32 of tRNA, to form 2-thiocytidine (s(2)C32). The sulfur atoms are provided by the cysteine/cysteine desulfurase (IscS) system. The protein is tRNA-cytidine(32) 2-sulfurtransferase of Nitrosomonas eutropha (strain DSM 101675 / C91 / Nm57).